We begin with the raw amino-acid sequence, 372 residues long: MTDALKRLSKEGVAIWLDDLSRKRITSGNLAELIDQQHVVGVTTNPSIFQKAISQGDGYDQQVSDLAARRVTVEEAIRMITTADVRDAADILRPVFDATDGQDGRVSIEVDPRLAHNTKATVAEAKQLAWLVDRPNTLIKIPATKAGIPAITEVIGLGISVNVTLIFSLERYRMVMDAYLAGLEKAKERGLDLSKIHSVASFFVSRVDTEIDKRIDALGTPEAKAARGKAGLANARLAYEAYEAVFSTDRWLALDKAQANKQRPLWASTGVKDPAYKDTMYVEELVAPNTVNTMPEATLEATADHGEIRGNTIAGTYEQARADLDAVEKLGIAYDDVVQLLEEEGVDKFEASWNDLLKSTEAELQRLAPSEG.

Residue K140 is the Schiff-base intermediate with substrate of the active site.

This sequence belongs to the transaldolase family. Type 2 subfamily.

The protein localises to the cytoplasm. The catalysed reaction is D-sedoheptulose 7-phosphate + D-glyceraldehyde 3-phosphate = D-erythrose 4-phosphate + beta-D-fructose 6-phosphate. It functions in the pathway carbohydrate degradation; pentose phosphate pathway; D-glyceraldehyde 3-phosphate and beta-D-fructose 6-phosphate from D-ribose 5-phosphate and D-xylulose 5-phosphate (non-oxidative stage): step 2/3. Functionally, transaldolase is important for the balance of metabolites in the pentose-phosphate pathway. This Streptomyces avermitilis (strain ATCC 31267 / DSM 46492 / JCM 5070 / NBRC 14893 / NCIMB 12804 / NRRL 8165 / MA-4680) protein is Transaldolase 2.